Consider the following 27-residue polypeptide: Caerulein precursor fragment R2 (27 aa).

Expressed by the skin glands.

It localises to the secreted. Antimicrobial peptide. In Xenopus ruwenzoriensis (Uganda clawed frog), this protein is Caerulein precursor fragment R2.